The chain runs to 342 residues: Heat-inducible transcription repressor HrcA (342 aa).

It belongs to the HrcA family.

Negative regulator of class I heat shock genes (grpE-dnaK-dnaJ and groELS operons). Prevents heat-shock induction of these operons. In Leptospira borgpetersenii serovar Hardjo-bovis (strain JB197), this protein is Heat-inducible transcription repressor HrcA.